We begin with the raw amino-acid sequence, 34 residues long: Protein HRURF (34 aa).

In terms of biological role, may function as an inhibitory translational control element that can negatively regulate protein translation of HR gene. The chain is Protein HRURF from Homo sapiens (Human).